A 184-amino-acid chain; its full sequence is Ribosome-recycling factor (184 aa).

Belongs to the RRF family.

The protein resides in the cytoplasm. In terms of biological role, responsible for the release of ribosomes from messenger RNA at the termination of protein biosynthesis. May increase the efficiency of translation by recycling ribosomes from one round of translation to another. The protein is Ribosome-recycling factor of Agathobacter rectalis (strain ATCC 33656 / DSM 3377 / JCM 17463 / KCTC 5835 / VPI 0990) (Eubacterium rectale).